Here is a 156-residue protein sequence, read N- to C-terminus: MRCPFCGNIDTQVKDSRPAEDHVSIRRRRFCPACGGRFTTYERVQLRDLVVIKTSGKREDFDRDKLERSIRISMQKRPIDPERIDQMISGIVRRLESMGETDIPSKKIGEIVMEALARIDTVAYVRFASVYKNFQAADDFEDFVHELRPPSPPTEE.

A zinc finger spans residues 3 to 34 (CPFCGNIDTQVKDSRPAEDHVSIRRRRFCPAC). The ATP-cone domain occupies 49–139 (LVVIKTSGKR…VYKNFQAADD (91 aa)).

Belongs to the NrdR family. Zn(2+) is required as a cofactor.

Negatively regulates transcription of bacterial ribonucleotide reductase nrd genes and operons by binding to NrdR-boxes. The polypeptide is Transcriptional repressor NrdR (Ruegeria pomeroyi (strain ATCC 700808 / DSM 15171 / DSS-3) (Silicibacter pomeroyi)).